Here is a 301-residue protein sequence, read N- to C-terminus: Cytosolic sulfotransferase 3 (301 aa).

53 to 58 is a binding site for 3'-phosphoadenylyl sulfate; it reads KAGTTW. Residue His-115 is the Proton acceptor of the active site. 3'-phosphoadenylyl sulfate contacts are provided by residues Arg-137, Ser-145, Tyr-201, 235 to 240, and 263 to 265; these read VQFDAM and RKG.

This sequence belongs to the sulfotransferase 1 family.

The protein localises to the cytoplasm. Its activity is regulated as follows. Inhibited by Hg(2+), Co(2+), Zn(2+), Cd(2+), Cu(2+) and Pb(2+) ions. Activated slightly by Mn(2+), Ca(2+) and Mg(2+) ions. In terms of biological role, sulfotransferase that utilizes 3'-phospho-5'-adenylyl sulfate (PAPS) as sulfonate donor to catalyze the sulfate conjugation of a variety of xenobiotic and endogenous compounds, including dopamine, T3 (triiodo-L-thyronine), T4 (thyroxine), estrone, DHEA (dehydroepiandrosterone), flavonoids, isoflavonoids and other phenolic compounds. The sequence is that of Cytosolic sulfotransferase 3 from Danio rerio (Zebrafish).